The primary structure comprises 298 residues: S-adenosyl-L-methionine-dependent methyltransferase dpfgK (298 aa).

Belongs to the methyltransferase superfamily.

The protein operates within secondary metabolite biosynthesis; terpenoid biosynthesis. Functionally, S-adenosyl-L-methionine-dependent methyltransferase; part of the gene cluster that mediates the biosynthesis of diterpenoid pyrones. The first step of the pathway is the synthesis of the alpha-pyrone moiety by the polyketide synthase dpfgA via condensation of one acetyl-CoA starter unit with 3 malonyl-CoA units and 2 methylations. The alpha-pyrone is then combined with geranylgeranyl pyrophosphate (GGPP) formed by the GGPP synthase dpfgD through the action of the prenyltransferase dpfgC to yield a linear alpha-pyrone diterpenoid. Subsequent steps in the diterpenoid pyrone biosynthetic pathway involve the decalin core formation, which is initiated by the epoxidation of the C10-C11 olefin by the FAD-dependent oxidoreductase dpfgE, and is followed by a cyclization cascade catalyzed by the terpene cyclase dpfgB. The short chain dehydrogenase/reductase dpfgG then oxidizes the 8S hydroxy group to a ketone and the short chain dehydrogenase/reductase dpfgH reduces the ketone to the 8R hydroxy group to yield higginsianin B. Higginsianin B is further methylated by the methyltransferase dpfgI to produce the intermediate named FDDP B. The cytochrome P450 monooxygenase dfgpJ then catalyzes a three-step oxidation at C-27 to generate a carboxylic acid as well as C-26 hydroxylation. Finally, methyltransferase dpfgK methylates the carboxylic acid generated by dpfgJ, yielding the final diterpenoid pyrones from the pathway which were named FDDP D and FDDP E. This is S-adenosyl-L-methionine-dependent methyltransferase dpfgK from Gibberella zeae (strain ATCC MYA-4620 / CBS 123657 / FGSC 9075 / NRRL 31084 / PH-1) (Wheat head blight fungus).